The following is a 386-amino-acid chain: Ribonucleoside-diphosphate reductase subunit M2 (386 aa).

Over residues 1–24 (MSSTRSPLKTKNENTISTKMNNMS) the composition is skewed to polar residues. Residues 1–36 (MSSTRSPLKTKNENTISTKMNNMSFVDKENTPPSLS) form a disordered region. Ser6 is subject to Phosphoserine. A Phosphothreonine modification is found at Thr31. Fe cation is bound by residues Asp135, Glu166, and His169. Residue Tyr173 is part of the active site. Positions 229, 263, and 266 each coordinate Fe cation.

It belongs to the ribonucleoside diphosphate reductase small chain family. As to quaternary structure, heterodimer of a large and a small subunit. Fe cation is required as a cofactor.

The protein localises to the cytoplasm. It catalyses the reaction a 2'-deoxyribonucleoside 5'-diphosphate + [thioredoxin]-disulfide + H2O = a ribonucleoside 5'-diphosphate + [thioredoxin]-dithiol. Provides the precursors necessary for DNA synthesis. Catalyzes the biosynthesis of deoxyribonucleotides from the corresponding ribonucleotides. In Danio rerio (Zebrafish), this protein is Ribonucleoside-diphosphate reductase subunit M2 (rrm2).